A 219-amino-acid chain; its full sequence is Germin-like protein subfamily 2 member 2 (219 aa).

The N-terminal stretch at 1 to 22 (MMNSRISIIIALSCIMITSIRA) is a signal peptide. Residues Cys32 and Cys47 are joined by a disulfide bond. Residues Asn52 and Asn70 are each glycosylated (N-linked (GlcNAc...) asparagine). The region spanning 59-209 (FFAGISKPAV…TFQVGSKMVD (151 aa)) is the Cupin type-1 domain. The Mn(2+) site is built by His109, His111, Glu116, and His155.

Belongs to the germin family. Oligomer (believed to be a pentamer but probably hexamer).

The protein localises to the secreted. It localises to the extracellular space. It is found in the apoplast. May play a role in plant defense. Probably has no oxalate oxidase activity even if the active site is conserved. The protein is Germin-like protein subfamily 2 member 2 of Arabidopsis thaliana (Mouse-ear cress).